Consider the following 259-residue polypeptide: Ribosome maturation factor RimP (259 aa).

Residues 198–259 are disordered; it reads SLGLAPEPPP…RGEIDTSEGD (62 aa). The segment covering 243 to 253 has biased composition (basic and acidic residues); the sequence is LAADKARRGEI.

Belongs to the RimP family.

Its subcellular location is the cytoplasm. In terms of biological role, required for maturation of 30S ribosomal subunits. This is Ribosome maturation factor RimP from Rhodopseudomonas palustris (strain TIE-1).